The following is a 208-amino-acid chain: Methyl-CpG-binding domain protein 3-like 5 (208 aa).

This sequence belongs to the MBD3L family.

This chain is Methyl-CpG-binding domain protein 3-like 5 (MBD3L5), found in Homo sapiens (Human).